Here is a 1021-residue protein sequence, read N- to C-terminus: MDVTGAPYSSGLNVRNVLLTESTSTFTPIETYNVQDDIRTIRISAKIAEESVVSRVPLPVSFKPISEITKLFDIIPISRGSTTSIVEHPQTSFMIKLRDNTFSDYACLDHLVAFEPALILHRLKMLFSILGKYASSIISEVPTLDVMIDNAQVTVIDMSKFDDRNMNTYADRLPRDIEVYAAKQDILKQYVRTSVNETPITFRDDLPMPVRERPTLYRRYIVPFTPVELSLYNMALQMLDLQYCHPLIVYKYLQDRAPPFLVVNDQIGLEMLSAGDGELLPRPVMEVLDYSLVYSSPLALNNLGSLLMSRIKTSIKVRSINEVSSSLSEIVNASSTVSNSASSAIANMNVAGVETIAAFIIRSVLNPNISYAMIGKLDLDAFNDFIYGTCLLLLQAITPPSAIAAMSRVRINNALAYFLLRYICPQPVYTRLLQNDVIPSLTNTLEWSSVDRDILAAIYSNLFVADGRIWNLVSRYYRELPPEEVTQVSVPARETSYGINETRGISLPYLFGDAITEMRPDNRLNDYKQRLNLPSRSPILIANPMRNNVVDLTNVNVKMDFIMDLYDQNNFLKSPAQWVRNSASNSALLAKFRDSVSNITGILENVLSNAYSNAVNTYCDSVYRAGVPLNWKYRVVIDPKDMMFVIFGVCPRYVLMGDSIPDFFAGSEDILILQLVRAIWEVMSNHMGNVPTRFFRMEDVQRDLSEMVSIVLSKKIDVTKYFTDDMRSTTFSKEAWERFIARQIGEELPPLYRTILDQVETINNYMEQMMSIMPIVDHFYVVRNSGIAARGSVNPILAATTLNLNQINTTMIIRDWSELVRLVMTQQRVDLNTSHSLFEAEFYKLSEIASNEFVRSNERGEAEPHFTDVEAIRINMYARYELKIYKEQGEFSKPTKLNKVMHEDLTSFVKSNIGKPYPPVFTIPIDIMLNDLGECTSTKTRMRSFKVDEYFKCFTGAQVIIPLDYVNLEHVGSIQDLQVMFNGSVSVRIKPWTIKENFDVNYVQTGNHEVLIDPLPNVLPI.

It belongs to the phytoreovirus inner capsid protein P3 family. Homodimer. Homomultimer.

The protein localises to the virion. It is found in the host cytoplasm. Functionally, capsid protein which self-assembles to form the inner icosahedral capsid with a T=2 symmetry, and consisting of 60 P3 dimers. This chain is Outer capsid protein P3, found in Nephotettix cincticeps (Green rice leafhopper).